A 1534-amino-acid chain; its full sequence is Ribosome-binding protein 1 (1534 aa).

Residues 1-7 (MDIYDTQ) lie on the Lumenal side of the membrane. A helical transmembrane segment spans residues 8-28 (TLGVMVFGGFMVVSAIGIFLV). At 29-1534 (STFSMKETSY…DSSSKEGTSV (1506 aa)) the chain is on the cytoplasmic side. Disordered stretches follow at residues 45–91 (QRKE…PAPN) and 125–152 (PAMP…VEPA). The segment covering 52–63 (THHQKVEKKKKE) has biased composition (basic residues). The span at 64–88 (KTVEKKGKTKKKEEKPNGKIPDHEP) shows a compositional bias: basic and acidic residues. Over residues 125–135 (PAMPQEKLAPS) the composition is skewed to low complexity. Residue lysine 148 forms a Glycyl lysine isopeptide (Lys-Gly) (interchain with G-Cter in SUMO2) linkage. A phosphoserine mark is found at serine 159 and serine 165. Disordered regions lie at residues 173 to 780 (APKE…PLYL), 968 to 987 (KELV…RKAL), and 1021 to 1082 (RELC…RAEN). The segment covering 175–194 (KEVPMVVVPPVGAKAGTPAT) has biased composition (low complexity). 54 repeat units span residues 197–206 (AQGKKAEGAQ), 207–216 (NQSRKAEGAP), 217–226 (NQGKKAEGAL), 227–236 (NQGKKAEGAQ), 237–246 (NQGKKVEVAP), 247–256 (NQGKKAEGGQ), 257–266 (NQGKKVEGAQ), 267–276 (NQGKKAEGTP), 277–286 (NQGKKAEGAP), 287–296 (NQGKKTDGAP), 297–306 (NQGKKSEGAP), 307–316 (NQGKKAEGAQ), 317–326 (NQGKKVEVAP), 327–336 (NQGKKAEGGQ), 337–346 (NQGKKVEGAQ), 347–356 (NQGKKAEGTP), 357–366 (NQGKKAEGAP), 367–376 (NQGKKTDGAP), 377–386 (NQGKKSEGAP), 387–396 (NQGKKVEGAQ), 397–406 (NQGKKVEGVQ), 407–416 (NQGKKAEGAQ), 417–426 (NQGKKAEGTS), 427–436 (SQGRKEEGTP), 437–446 (NLGKKAEGSP), 447–456 (NQGKKVEVVQ), 457–466 (NQSKKVEGAP), 467–476 (NQGKKAEGSQ), 477–486 (NQGKKTEGAS), 487–496 (NQGKKVDGAQ), 497–506 (NQGKKAEGAP), 507–516 (NQGKKVEGAQ), 517–526 (NQGKKAEGTP), 527–536 (NQGKKAEGAQ), 537–546 (NQGKKAEGAP), 547–556 (NQGKKAEGAP), 557–566 (NQGKKAEGAP), 567–576 (NQGKKAEGAP), 577–586 (NQGKKAEAAP), 587–596 (NQGKKAEGAP), 597–606 (NQGKKAEGAP), 607–616 (NQGKKAEAAP), 617–626 (NQGKKAEGAP), 627–636 (NQGKKAEGAP), 637–646 (NQGKKAEGAP), 647–656 (NQGKKAEGAQ), 657–666 (NQGKKAEGAP), 667–676 (NQGKKADLVA), 677–686 (NQGTKAEGVA), 687–696 (GQGKKAEGAP), 697–706 (NQGKKGEGTP), 707–716 (NQGKKSEGSP), 717–726 (NQGKKVDASA), and 727–736 (NQSKRAESAP). Positions 197-736 (AQGKKAEGAQ…NQSKRAESAP (540 aa)) are 54 X 10 AA tandem repeats of [NASG]-[QL]-[GS]-[KRT]-[KR]-[AVTSEG]-[ED]-[AGVLS]-[ATGSV]-[PQLSA]. Phosphothreonine is present on threonine 275. Over residues 395–428 (AQNQGKKVEGVQNQGKKAEGAQNQGKKAEGTSSQ) the composition is skewed to polar residues. A compositionally biased stretch (polar residues) spans 474–499 (GSQNQGKKTEGASNQGKKVDGAQNQG). Residues 705 to 718 (TPNQGKKSEGSPNQ) show a composition bias toward polar residues. At serine 715 the chain carries Phosphoserine. A Phosphoserine modification is found at serine 747. Lysine 752 is covalently cross-linked (Glycyl lysine isopeptide (Lys-Gly) (interchain with G-Cter in SUMO1)). Serine 1032 carries the post-translational modification Phosphoserine. Positions 1059-1080 (AEVKSKSEELSGLHGQLKEARA) are enriched in basic and acidic residues. Lysine 1064 is subject to N6-acetyllysine. 2 positions are modified to phosphoserine: serine 1091 and serine 1110. Disordered stretches follow at residues 1224 to 1251 (ELLK…ETQN), 1391 to 1416 (KSHV…VELK), and 1509 to 1534 (ERDT…GTSV). Residues 1509–1528 (ERDTVKKLQEQLDKTDDSSS) show a composition bias toward basic and acidic residues.

Its subcellular location is the endoplasmic reticulum membrane. In terms of biological role, acts as a ribosome receptor and mediates interaction between the ribosome and the endoplasmic reticulum membrane. This Canis lupus familiaris (Dog) protein is Ribosome-binding protein 1 (RRBP1).